We begin with the raw amino-acid sequence, 545 residues long: CTP synthase (545 aa).

An amidoligase domain region spans residues 1 to 266 (MATNYIFVTG…DDFVCERFRL (266 aa)). Residue serine 14 participates in CTP binding. Serine 14 serves as a coordination point for UTP. Residues 15-20 (SLGKGI) and aspartate 72 contribute to the ATP site. Mg(2+)-binding residues include aspartate 72 and glutamate 140. Residues 147–149 (DIE), 187–192 (KTKPTQ), and lysine 223 each bind CTP. UTP is bound by residues 187 to 192 (KTKPTQ) and lysine 223. 239–241 (KDV) serves as a coordination point for ATP. The Glutamine amidotransferase type-1 domain maps to 291-542 (TIGMVGKYTE…VKAAYENHKK (252 aa)). Residue glycine 352 coordinates L-glutamine. Cysteine 379 acts as the Nucleophile; for glutamine hydrolysis in catalysis. L-glutamine is bound by residues 380-383 (LGMQ), glutamate 403, and arginine 470. Catalysis depends on residues histidine 515 and glutamate 517.

This sequence belongs to the CTP synthase family. As to quaternary structure, homotetramer.

The enzyme catalyses UTP + L-glutamine + ATP + H2O = CTP + L-glutamate + ADP + phosphate + 2 H(+). It catalyses the reaction L-glutamine + H2O = L-glutamate + NH4(+). It carries out the reaction UTP + NH4(+) + ATP = CTP + ADP + phosphate + 2 H(+). It participates in pyrimidine metabolism; CTP biosynthesis via de novo pathway; CTP from UDP: step 2/2. With respect to regulation, allosterically activated by GTP, when glutamine is the substrate; GTP has no effect on the reaction when ammonia is the substrate. The allosteric effector GTP functions by stabilizing the protein conformation that binds the tetrahedral intermediate(s) formed during glutamine hydrolysis. Inhibited by the product CTP, via allosteric rather than competitive inhibition. In terms of biological role, catalyzes the ATP-dependent amination of UTP to CTP with either L-glutamine or ammonia as the source of nitrogen. Regulates intracellular CTP levels through interactions with the four ribonucleotide triphosphates. This Haemophilus influenzae (strain PittEE) protein is CTP synthase.